The primary structure comprises 263 residues: Lens fiber major intrinsic protein (263 aa).

Residues 1–9 (MWELRSASF) lie on the Cytoplasmic side of the membrane. Residues 10-29 (WRAIFAEFFATLFYVFFGLG) traverse the membrane as a helical segment. Topologically, residues 30–41 (ASLRWTPGPLHV) are extracellular. A helical transmembrane segment spans residues 42–59 (LQVALAFGLALATLVQAV). Topologically, residues 60–61 (GH) are cytoplasmic. Residues 62-77 (ISGAHVNPAVTFAFLV) constitute an intramembrane region (discontinuously helical). The short motif at 68 to 70 (NPA) is the NPA 1 element. The Cytoplasmic portion of the chain corresponds to 78–82 (GSQMS). The chain crosses the membrane as a helical span at residues 83 to 106 (LLRAFCYMAAQLLGAVAGAAVLYS). The Extracellular segment spans residues 107-127 (VTPPAVRGNLALNTLHPGVSV). Residues 128–148 (GQATTVEIFLTLQFVLCIFAT) form a helical membrane-spanning segment. The Cytoplasmic portion of the chain corresponds to 149–156 (YDERRNGR). The helical transmembrane segment at 157–175 (LGSVALAVGFSLTLGHLFG) threads the bilayer. The Extracellular segment spans residues 176–178 (MYY). The segment at residues 179–193 (TGAGMNPARSFAPAI) is an intramembrane region (discontinuously helical). The NPA 2 signature appears at 184–186 (NPA). Residues 194 to 200 (LTRNFTN) are Extracellular-facing. The chain crosses the membrane as a helical span at residues 201 to 222 (HWVYWVGPIIGGGLGSLLYDFL). The Cytoplasmic portion of the chain corresponds to 223-263 (LFPRLKSVSERLSILKGARPSDSNGQPEGTGEPVELKTQAL). An interaction with CALM region spans residues 227 to 237 (LKSVSERLSIL). Phosphoserine occurs at positions 235, 243, and 245. Residues 240 to 263 (ARPSDSNGQPEGTGEPVELKTQAL) are disordered. At asparagine 246 the chain carries Deamidated asparagine.

The protein belongs to the MIP/aquaporin (TC 1.A.8) family. In terms of assembly, homotetramer; each monomer provides an independent water pore. Two homotetramers on opposing membranes can dimerize, forming a cell-cell junction. Interacts with CALM; the calcium-calmodulin/CALM complex interacts with the cytoplasmic domains of two aquaporins, leading to channel closure. Interacts with BFSP1 (via C-terminus); prevents calcium-dependent inhibition of the water channel activity. In terms of processing, subject to partial proteolytic cleavage in the eye lens core. Partial proteolysis promotes interactions between tetramers from adjoining membranes. Fatty acylated at Met-1 and Lys-238. The acyl modifications, in decreasing order of ion abundance, are: oleoyl (C18:1) &gt; palmitoyl (C16:0) &gt; stearoyl (C18:0) &gt; eicosenoyl (C20:1) &gt; dihomo-gamma-linolenoyl (C20:3) &gt; palmitoleoyl (C16:1) &gt; eicosadienoyl (C20:2).

It is found in the cell membrane. The protein localises to the cell junction. The catalysed reaction is H2O(in) = H2O(out). The water channel activity is inhibited by calcium through calmodulin/CALM. Aquaporins form homotetrameric transmembrane channels, with each monomer independently mediating water transport across the plasma membrane along its osmotic gradient. Specifically expressed in lens fiber cells, this aquaporin is crucial for maintaining lens water homeostasis and transparency. Beyond water permeability, it also acts as a cell-to-cell adhesion molecule, forming thin junctions between lens fiber cells that are essential for maintaining the ordered structure and transparency of the lens. This is Lens fiber major intrinsic protein from Canis lupus familiaris (Dog).